The chain runs to 331 residues: Anthranilate phosphoribosyltransferase (331 aa).

5-phospho-alpha-D-ribose 1-diphosphate is bound by residues Gly-79, 82 to 83 (GD), Thr-87, 89 to 92 (NIST), 107 to 115 (KHGNYGATS), and Ala-119. An anthranilate-binding site is contributed by Gly-79. Ser-91 contacts Mg(2+). Asn-110 is a binding site for anthranilate. Position 165 (Arg-165) interacts with anthranilate. Asp-223 and Glu-224 together coordinate Mg(2+).

The protein belongs to the anthranilate phosphoribosyltransferase family. As to quaternary structure, homodimer. Mg(2+) is required as a cofactor.

The catalysed reaction is N-(5-phospho-beta-D-ribosyl)anthranilate + diphosphate = 5-phospho-alpha-D-ribose 1-diphosphate + anthranilate. Its pathway is amino-acid biosynthesis; L-tryptophan biosynthesis; L-tryptophan from chorismate: step 2/5. Its function is as follows. Catalyzes the transfer of the phosphoribosyl group of 5-phosphorylribose-1-pyrophosphate (PRPP) to anthranilate to yield N-(5'-phosphoribosyl)-anthranilate (PRA). The protein is Anthranilate phosphoribosyltransferase of Phocaeicola vulgatus (strain ATCC 8482 / DSM 1447 / JCM 5826 / CCUG 4940 / NBRC 14291 / NCTC 11154) (Bacteroides vulgatus).